The primary structure comprises 309 residues: Aspartate carbamoyltransferase catalytic subunit (309 aa).

2 residues coordinate carbamoyl phosphate: R55 and T56. L-aspartate is bound at residue K85. Carbamoyl phosphate is bound by residues R106, H135, and Q138. L-aspartate is bound by residues R168 and R230. Residues L268 and P269 each coordinate carbamoyl phosphate.

The protein belongs to the aspartate/ornithine carbamoyltransferase superfamily. ATCase family. Heterododecamer (2C3:3R2) of six catalytic PyrB chains organized as two trimers (C3), and six regulatory PyrI chains organized as three dimers (R2).

The catalysed reaction is carbamoyl phosphate + L-aspartate = N-carbamoyl-L-aspartate + phosphate + H(+). The protein operates within pyrimidine metabolism; UMP biosynthesis via de novo pathway; (S)-dihydroorotate from bicarbonate: step 2/3. In terms of biological role, catalyzes the condensation of carbamoyl phosphate and aspartate to form carbamoyl aspartate and inorganic phosphate, the committed step in the de novo pyrimidine nucleotide biosynthesis pathway. This Aliivibrio salmonicida (strain LFI1238) (Vibrio salmonicida (strain LFI1238)) protein is Aspartate carbamoyltransferase catalytic subunit.